The following is a 348-amino-acid chain: Phenylalanine--tRNA ligase alpha subunit (348 aa).

Mg(2+) is bound at residue glutamate 259.

The protein belongs to the class-II aminoacyl-tRNA synthetase family. Phe-tRNA synthetase alpha subunit type 1 subfamily. In terms of assembly, tetramer of two alpha and two beta subunits. It depends on Mg(2+) as a cofactor.

The protein resides in the cytoplasm. The enzyme catalyses tRNA(Phe) + L-phenylalanine + ATP = L-phenylalanyl-tRNA(Phe) + AMP + diphosphate + H(+). The chain is Phenylalanine--tRNA ligase alpha subunit from Lacticaseibacillus paracasei (strain ATCC 334 / BCRC 17002 / CCUG 31169 / CIP 107868 / KCTC 3260 / NRRL B-441) (Lactobacillus paracasei).